The primary structure comprises 464 residues: ATP synthase subunit beta (464 aa).

153-160 (GGAGVGKT) serves as a coordination point for ATP.

Belongs to the ATPase alpha/beta chains family. As to quaternary structure, F-type ATPases have 2 components, CF(1) - the catalytic core - and CF(0) - the membrane proton channel. CF(1) has five subunits: alpha(3), beta(3), gamma(1), delta(1), epsilon(1). CF(0) has three main subunits: a(1), b(2) and c(9-12). The alpha and beta chains form an alternating ring which encloses part of the gamma chain. CF(1) is attached to CF(0) by a central stalk formed by the gamma and epsilon chains, while a peripheral stalk is formed by the delta and b chains.

Its subcellular location is the cell membrane. It catalyses the reaction ATP + H2O + 4 H(+)(in) = ADP + phosphate + 5 H(+)(out). Functionally, produces ATP from ADP in the presence of a proton gradient across the membrane. The catalytic sites are hosted primarily by the beta subunits. In Acetivibrio thermocellus (strain ATCC 27405 / DSM 1237 / JCM 9322 / NBRC 103400 / NCIMB 10682 / NRRL B-4536 / VPI 7372) (Clostridium thermocellum), this protein is ATP synthase subunit beta.